Here is a 434-residue protein sequence, read N- to C-terminus: Mothers against decapentaplegic homolog 9 (434 aa).

Residues 16-140 (PAVKRLLGWK…YRRVETPVLP (125 aa)) enclose the MH1 domain. Zn(2+)-binding residues include C68, C113, C125, and H130. Positions 171-222 (MPHNATYPDSFQQSLGPAPPSSPGHVFPQSPCPTSYPQSPGSPSESDSPYQH) are disordered. Polar residues predominate over residues 202 to 221 (CPTSYPQSPGSPSESDSPYQ). One can recognise an MH2 domain in the interval 236 to 434 (WCSVAYYELN…SPHNPISSVS (199 aa)).

The protein belongs to the dwarfin/SMAD family. In terms of assembly, interaction with the co-SMAD SMAD4. Interacts with PEBP2-alpha subunit. Interacts with RANBP3L. In terms of processing, phosphorylated on serine by BMP (bone morphogenetic proteins) type 1 receptor kinase. Phosphorylated by activin type I receptor-like kinase-2 (ALK-2).

It is found in the cytoplasm. Its subcellular location is the nucleus. Transcriptional modulator activated by BMP (bone morphogenetic proteins) type 1 receptor kinase. SMAD9 is a receptor-regulated SMAD (R-SMAD). Has been shown to be activated by activin type I receptor-like kinase-2 (ALK-2) which stimulates heteromerization between SMAD9 and SMAD4. ALK-2 binds TGF-beta, activin and BMP. In Rattus norvegicus (Rat), this protein is Mothers against decapentaplegic homolog 9 (Smad9).